The chain runs to 338 residues: Phospho-2-dehydro-3-deoxyheptonate aldolase (338 aa).

Belongs to the class-I DAHP synthase family. In terms of assembly, homotetramer. Requires a divalent metal cation as cofactor.

It carries out the reaction D-erythrose 4-phosphate + phosphoenolpyruvate + H2O = 7-phospho-2-dehydro-3-deoxy-D-arabino-heptonate + phosphate. It participates in metabolic intermediate biosynthesis; chorismate biosynthesis; chorismate from D-erythrose 4-phosphate and phosphoenolpyruvate: step 1/7. With respect to regulation, inhibited by L-phenylalanine and L-tyrosine. Its function is as follows. Catalyzes the condensation of phosphoenolpyruvate (PEP) and D-erythrose-4-phosphate (E4P) giving rise to 3-deoxy-D-arabino-heptulosonate-7-phosphate (DAHP). This Thermotoga maritima (strain ATCC 43589 / DSM 3109 / JCM 10099 / NBRC 100826 / MSB8) protein is Phospho-2-dehydro-3-deoxyheptonate aldolase (aroF).